A 195-amino-acid chain; its full sequence is Protein GrpE (195 aa).

Belongs to the GrpE family. As to quaternary structure, homodimer.

Its subcellular location is the cytoplasm. Functionally, participates actively in the response to hyperosmotic and heat shock by preventing the aggregation of stress-denatured proteins, in association with DnaK and GrpE. It is the nucleotide exchange factor for DnaK and may function as a thermosensor. Unfolded proteins bind initially to DnaJ; upon interaction with the DnaJ-bound protein, DnaK hydrolyzes its bound ATP, resulting in the formation of a stable complex. GrpE releases ADP from DnaK; ATP binding to DnaK triggers the release of the substrate protein, thus completing the reaction cycle. Several rounds of ATP-dependent interactions between DnaJ, DnaK and GrpE are required for fully efficient folding. The sequence is that of Protein GrpE from Francisella tularensis subsp. tularensis (strain FSC 198).